The sequence spans 819 residues: Advillin (819 aa).

Positions 1–731 are core; sequence MSLSSAFRAV…YEQLKNELGD (731 aa). One copy of the Gelsolin-like 1 repeat lies at 24–73; it reads MELALVPLSAHGNFYEGDCYIVLSTRRVGSLLSQNIHFWIGKDSSQDEQS. Residue Tyr-85 is modified to Phosphotyrosine. Residues 109-116 and 135-143 each bind a 1,2-diacyl-sn-glycero-3-phospho-(1D-myo-inositol-4,5-bisphosphate); these read KQGIIYKK and RLLHVKGKR. Gelsolin-like repeat units follow at residues 145 to 185, 262 to 306, 403 to 454, 525 to 565, and 628 to 669; these read IQAT…GERL, LSVT…VEKQ, ENLE…DELA, TKAV…DERA, and FLVT…TEKK. Positions 628-819 are required for interaction with F-actin; it reads FLVTEVTDFT…LQLKKERGLF (192 aa). The segment at 732-819 is headpiece; sequence ATAIVRITAD…LQLKKERGLF (88 aa). Phosphotyrosine occurs at positions 748 and 758. The region spanning 753–819 is the HP domain; it reads DGEPKYYPVE…LQLKKERGLF (67 aa).

The protein belongs to the villin/gelsolin family. Associates (via C-terminus) with actin. Interacts with F-actin. Interacts with SCARF1; the interaction occurs in embryonic dorsal root ganglions at 18 dpc and induces neurite-like outgrowth. Interacts with PLCE1. Interacts with ACTR2 and ACTR3; associates with the ARP2/3 complex. In terms of tissue distribution, most highly expressed in the endometrium of the uterus, the intestinal villi and the testes. Weaker expression also detected in the brain, dorsal root ganglions and on the surface of the tongue.

It localises to the cytoplasm. The protein localises to the cytoskeleton. The protein resides in the cell projection. It is found in the lamellipodium. Its subcellular location is the cell junction. It localises to the focal adhesion. The protein localises to the neuron projection. The protein resides in the axon. Its function is as follows. Ca(2+)-regulated actin-binding protein which plays an important role in actin bundling. May have a unique function in the morphogenesis of neuronal cells which form ganglia. Required for SREC1-mediated regulation of neurite-like outgrowth. Plays a role in regenerative sensory axon outgrowth and remodeling processes after peripheral injury in neonates. Involved in the formation of long fine actin-containing filopodia-like structures in fibroblast. Plays a role in ciliogenesis. In podocytes, controls lamellipodia formation through the regulation of EGF-induced diacylglycerol generation by PLCE1 and ARP2/3 complex assembly. This is Advillin from Mus musculus (Mouse).